Consider the following 225-residue polypeptide: Cold-regulated 413 inner membrane protein 1, chloroplastic (225 aa).

The N-terminal 76 residues, 1 to 76, are a transit peptide targeting the chloroplast; sequence MASLCLSSSR…RKRGSSVVCY (76 aa). Residue Ala-77 is a topological domain, stromal. Residues 78–98 traverse the membrane as a helical segment; the sequence is APISANSLQWISTISCLALML. At 99–102 the chain is on the chloroplast intermembrane side; the sequence is ARGT. The chain crosses the membrane as a helical span at residues 103–123; it reads GIHKSVVVPLFALHAPSSIVA. Residues 124–128 lie on the Stromal side of the membrane; it reads WIKGE. Residues 129-149 traverse the membrane as a helical segment; that stretch reads YGVWAAFLALIARLFFTFPGE. The Chloroplast intermembrane portion of the chain corresponds to 150 to 151; the sequence is LE. A helical membrane pass occupies residues 152-172; the sequence is LPFIALLLVIVAPYQVMNIRG. Topologically, residues 173 to 175 are stromal; sequence KQE. Residues 176 to 196 form a helical membrane-spanning segment; it reads GAIIAIAISGFLAFQHFSRAG. The Chloroplast intermembrane portion of the chain corresponds to 197 to 204; sequence SLEKAYEK. The helical transmembrane segment at 205–225 threads the bilayer; the sequence is GSVLATVAIIGVTVVSLLLLL.

The protein belongs to the Cold-regulated 413 protein family.

Its subcellular location is the plastid. It localises to the chloroplast inner membrane. This Arabidopsis thaliana (Mouse-ear cress) protein is Cold-regulated 413 inner membrane protein 1, chloroplastic (COR413IM1).